The following is a 266-amino-acid chain: Tryptophan synthase alpha chain (266 aa).

Catalysis depends on proton acceptor residues Glu-51 and Asp-62.

This sequence belongs to the TrpA family. As to quaternary structure, tetramer of two alpha and two beta chains.

The enzyme catalyses (1S,2R)-1-C-(indol-3-yl)glycerol 3-phosphate + L-serine = D-glyceraldehyde 3-phosphate + L-tryptophan + H2O. Its pathway is amino-acid biosynthesis; L-tryptophan biosynthesis; L-tryptophan from chorismate: step 5/5. In terms of biological role, the alpha subunit is responsible for the aldol cleavage of indoleglycerol phosphate to indole and glyceraldehyde 3-phosphate. In Prochlorococcus marinus (strain NATL1A), this protein is Tryptophan synthase alpha chain.